A 156-amino-acid polypeptide reads, in one-letter code: MIP18 family protein galla-2 (156 aa).

Belongs to the MIP18 family. In terms of assembly, component of the CGX complex composed of crb, galla (galla-1 or galla-2) and Xpd. Interacts with crb (via intracellular domain). Also able to interact with Xpd in the absence of crb. Interacts with Mms19.

Component of the crb-galla-Xpd (CGX) complex which is essential for proper mitotic chromosome segregation in early embryos. The CGX complex is also required for cell proliferation in developing wing disks. In the CGX complex, acts with crb to recruit Xpd thus forming the functional complex. In Drosophila melanogaster (Fruit fly), this protein is MIP18 family protein galla-2.